Reading from the N-terminus, the 369-residue chain is Phenylalanine--tRNA ligase alpha subunit (369 aa).

A Mg(2+)-binding site is contributed by Glu269.

It belongs to the class-II aminoacyl-tRNA synthetase family. Phe-tRNA synthetase alpha subunit type 1 subfamily. As to quaternary structure, tetramer of two alpha and two beta subunits. Mg(2+) is required as a cofactor.

The protein localises to the cytoplasm. The enzyme catalyses tRNA(Phe) + L-phenylalanine + ATP = L-phenylalanyl-tRNA(Phe) + AMP + diphosphate + H(+). The chain is Phenylalanine--tRNA ligase alpha subunit from Brucella abortus (strain 2308).